The sequence spans 352 residues: Heat-inducible transcription repressor HrcA (352 aa).

It belongs to the HrcA family.

Its function is as follows. Negative regulator of class I heat shock genes (grpE-dnaK-dnaJ and groELS operons). Prevents heat-shock induction of these operons. This Ralstonia nicotianae (strain ATCC BAA-1114 / GMI1000) (Ralstonia solanacearum) protein is Heat-inducible transcription repressor HrcA.